A 201-amino-acid chain; its full sequence is Putative 3-methyladenine DNA glycosylase (201 aa).

Belongs to the DNA glycosylase MPG family.

This Trichodesmium erythraeum (strain IMS101) protein is Putative 3-methyladenine DNA glycosylase.